The primary structure comprises 146 residues: Large ribosomal subunit protein uL13 (146 aa).

Belongs to the universal ribosomal protein uL13 family. Part of the 50S ribosomal subunit.

Its function is as follows. This protein is one of the early assembly proteins of the 50S ribosomal subunit, although it is not seen to bind rRNA by itself. It is important during the early stages of 50S assembly. This is Large ribosomal subunit protein uL13 from Borreliella burgdorferi (strain ATCC 35210 / DSM 4680 / CIP 102532 / B31) (Borrelia burgdorferi).